Reading from the N-terminus, the 158-residue chain is 2-C-methyl-D-erythritol 2,4-cyclodiphosphate synthase (158 aa).

A divalent metal cation-binding residues include D9 and H11. 4-CDP-2-C-methyl-D-erythritol 2-phosphate contacts are provided by residues 9 to 11 (DVH) and 35 to 36 (HS). H43 lines the a divalent metal cation pocket. Residues 57-59 (DIG), 62-66 (FPDTD), 101-107 (AQKPKMA), 133-136 (TTTE), F140, and R143 contribute to the 4-CDP-2-C-methyl-D-erythritol 2-phosphate site.

It belongs to the IspF family. As to quaternary structure, homotrimer. A divalent metal cation is required as a cofactor.

The catalysed reaction is 4-CDP-2-C-methyl-D-erythritol 2-phosphate = 2-C-methyl-D-erythritol 2,4-cyclic diphosphate + CMP. It participates in isoprenoid biosynthesis; isopentenyl diphosphate biosynthesis via DXP pathway; isopentenyl diphosphate from 1-deoxy-D-xylulose 5-phosphate: step 4/6. In terms of biological role, involved in the biosynthesis of isopentenyl diphosphate (IPP) and dimethylallyl diphosphate (DMAPP), two major building blocks of isoprenoid compounds. Catalyzes the conversion of 4-diphosphocytidyl-2-C-methyl-D-erythritol 2-phosphate (CDP-ME2P) to 2-C-methyl-D-erythritol 2,4-cyclodiphosphate (ME-CPP) with a corresponding release of cytidine 5-monophosphate (CMP). The chain is 2-C-methyl-D-erythritol 2,4-cyclodiphosphate synthase from Bacillus thuringiensis subsp. konkukian (strain 97-27).